A 49-amino-acid chain; its full sequence is Large ribosomal subunit protein bL33B (49 aa).

The protein belongs to the bacterial ribosomal protein bL33 family.

This chain is Large ribosomal subunit protein bL33B, found in Geobacillus kaustophilus (strain HTA426).